The chain runs to 327 residues: UDP-N-acetylenolpyruvoylglucosamine reductase (327 aa).

The 182-residue stretch at 42 to 223 (RTGGLAELFY…RAAMDEVALH (182 aa)) folds into the FAD-binding PCMH-type domain. Residue Arg-188 is part of the active site. Ser-237 functions as the Proton donor in the catalytic mechanism. Glu-307 is a catalytic residue.

The protein belongs to the MurB family. FAD serves as cofactor.

It localises to the cytoplasm. It carries out the reaction UDP-N-acetyl-alpha-D-muramate + NADP(+) = UDP-N-acetyl-3-O-(1-carboxyvinyl)-alpha-D-glucosamine + NADPH + H(+). It participates in cell wall biogenesis; peptidoglycan biosynthesis. In terms of biological role, cell wall formation. In Bartonella tribocorum (strain CIP 105476 / IBS 506), this protein is UDP-N-acetylenolpyruvoylglucosamine reductase.